A 213-amino-acid polypeptide reads, in one-letter code: 3-hexulose-6-phosphate synthase 2 (213 aa).

The protein belongs to the HPS/KGPDC family. HPS subfamily.

It carries out the reaction D-ribulose 5-phosphate + formaldehyde = D-arabino-hex-3-ulose 6-phosphate. The protein operates within one-carbon metabolism; formaldehyde assimilation via RuMP pathway; D-fructose 6-phosphate from D-ribulose 5-phosphate and formaldehyde: step 1/2. Functionally, catalyzes the condensation of ribulose 5-phosphate with formaldehyde to form 3-hexulose 6-phosphate. This chain is 3-hexulose-6-phosphate synthase 2, found in Staphylococcus saprophyticus subsp. saprophyticus (strain ATCC 15305 / DSM 20229 / NCIMB 8711 / NCTC 7292 / S-41).